Consider the following 103-residue polypeptide: uncharacterized protein (103 aa).

Low complexity predominate over residues 38-51; the sequence is TTTTSSTTSASTTS. The tract at residues 38–70 is disordered; that stretch reads TTTTSSTTSASTTSQPSFSLPTSCNSNSPQSNL. Over residues 52 to 70 the composition is skewed to polar residues; it reads QPSFSLPTSCNSNSPQSNL.

This is an uncharacterized protein from Dictyostelium discoideum (Social amoeba).